The following is a 104-amino-acid chain: MIPGELFIQDGEIELNAERETATLSVANAGDRPIQVGSHYHFFETNPALQFDRAKARGMRLDIAAGTAVRFEPGQSREVQLVALAGKREVYGFRGEVMGKLDKA.

The protein belongs to the urease beta subunit family. In terms of assembly, heterotrimer of UreA (gamma), UreB (beta) and UreC (alpha) subunits. Three heterotrimers associate to form the active enzyme.

It localises to the cytoplasm. The catalysed reaction is urea + 2 H2O + H(+) = hydrogencarbonate + 2 NH4(+). It participates in nitrogen metabolism; urea degradation; CO(2) and NH(3) from urea (urease route): step 1/1. The protein is Urease subunit beta of Rhodopseudomonas palustris (strain BisB18).